We begin with the raw amino-acid sequence, 307 residues long: MKLIIATRKSQLALWQSEHVAQILKNTHQIEVLLEGFKTKGDVLLDSPLAKIGGKGLFTKELEESMLRKEAHLAVHSLKDVPSFFPRGLVLAAVSKREQSNDAMLSQNYKDFLSLPKGAKIGTTSLRRKMQLLLLRPDLEIISLRGNVNSRIEKLKNNDFDAIILAMAGIKRLNLDKQVNFVYEFSKDELIPAASQGALGIESINDEKILELLKCLNDENALIETSIEREFIATLEGGCQVPIGINAELLGDEICVRAVLGLPDGSEILKDKRMIKKNDFKGFGESLAKEFIAKGAKELLKKAESMI.

Cys-239 carries the S-(dipyrrolylmethanemethyl)cysteine modification.

It belongs to the HMBS family. As to quaternary structure, monomer. It depends on dipyrromethane as a cofactor.

It catalyses the reaction 4 porphobilinogen + H2O = hydroxymethylbilane + 4 NH4(+). It participates in porphyrin-containing compound metabolism; protoporphyrin-IX biosynthesis; coproporphyrinogen-III from 5-aminolevulinate: step 2/4. Functionally, tetrapolymerization of the monopyrrole PBG into the hydroxymethylbilane pre-uroporphyrinogen in several discrete steps. In Campylobacter jejuni subsp. jejuni serotype O:6 (strain 81116 / NCTC 11828), this protein is Porphobilinogen deaminase.